The chain runs to 620 residues: Somatic embryogenesis receptor kinase 4 (620 aa).

A signal peptide spans 1 to 33 (MTSSKMEQRSLLCFLYLLLLFNFTLRVAGNAEG). Residues 34–234 (DALTQLKNSL…GGQMTAAIAG (201 aa)) lie on the Extracellular side of the membrane. 5 LRR repeats span residues 100–122 (NLQYLELYSNNITGEIPEELGDL), 124–146 (ELVSLDLYANSISGPIPSSLGKL), 148–170 (KLRFLRLNNNSLSGEIPMTLTSV), 171–193 (QLQVLDISNNRLSGDIPVNGSFS), and 194–215 (LFTPISFANNSLTDLPEPPPTS). N-linked (GlcNAc...) asparagine glycosylation occurs at Asn110. 3 N-linked (GlcNAc...) asparagine glycosylation sites follow: Asn156, Asn189, and Asn202. Residues 205–227 (LTDLPEPPPTSTSPTPPPPSGGQ) form a disordered region. Residues 209–224 (PEPPPTSTSPTPPPPS) show a composition bias toward pro residues. Residues 235–255 (GVAAGAALLFAVPAIAFAWWL) form a helical membrane-spanning segment. Topologically, residues 256–620 (RRKPQDHFFD…IENDYPSGPR (365 aa)) are cytoplasmic. Thr291 carries the post-translational modification Phosphothreonine. The Protein kinase domain maps to 294–591 (FSNKNVLGRG…KEEMPIHDFN (298 aa)). Ser295 is subject to Phosphoserine. ATP-binding positions include 300–308 (LGRGGFGKV) and Lys322. Phosphoserine is present on residues Ser375 and Ser378. Asp421 serves as the catalytic Proton acceptor. A phosphothreonine mark is found at Thr454, Thr455, and Thr460. A Phosphotyrosine modification is found at Tyr468. At Ser470 the chain carries Phosphoserine. Position 471 is a phosphothreonine (Thr471). Ser475 is subject to Phosphoserine. Position 551 is a phosphothreonine (Thr551).

The protein belongs to the protein kinase superfamily. Ser/Thr protein kinase family. Interacts with the EF-Tu receptor EFR and FLS2 in a specific ligand-induced manner. Interacts with TMK4/BARK1. Interacts with ERECTA in a EPF2-induced manner. Interacts with ERL1 in a EPF1-induced manner. Interacts with TMM. Forms a complex with MIK2 in response to SCOOP12 perception. In terms of processing, autophosphorylated on Thr and Tyr residues.

Its subcellular location is the cell membrane. It catalyses the reaction L-seryl-[protein] + ATP = O-phospho-L-seryl-[protein] + ADP + H(+). The enzyme catalyses L-threonyl-[protein] + ATP = O-phospho-L-threonyl-[protein] + ADP + H(+). It carries out the reaction L-tyrosyl-[protein] + ATP = O-phospho-L-tyrosyl-[protein] + ADP + H(+). Functionally, dual specificity kinase acting on both serine/threonine- and tyrosine-containing substrates. Positively regulates the BR-dependent plant growth pathway and negatively regulates the BR-independent cell-death pathway. Required during SCOOP small peptides (e.g. SCOOP10 and SCOOP12) perception and signaling; associates with MIK2 as a coreceptor upon MIK2 perception of SCOOP peptides, and relays the signaling through the activation of receptor-like cytosolic kinases (RLCKs) BIK1 and PBL1. The polypeptide is Somatic embryogenesis receptor kinase 4 (Arabidopsis thaliana (Mouse-ear cress)).